Here is a 331-residue protein sequence, read N- to C-terminus: tRNA-cytidine(32) 2-sulfurtransferase (331 aa).

Positions 1 to 31 (MNAPHMNDTTADAATLDATAAPAGRPALTRR) are disordered. The segment covering 8-23 (DTTADAATLDATAAPA) has biased composition (low complexity). The PP-loop motif motif lies at 71-76 (SGGKDS). Positions 146, 149, and 237 each coordinate [4Fe-4S] cluster.

The protein belongs to the TtcA family. In terms of assembly, homodimer. Mg(2+) is required as a cofactor. The cofactor is [4Fe-4S] cluster.

It is found in the cytoplasm. The enzyme catalyses cytidine(32) in tRNA + S-sulfanyl-L-cysteinyl-[cysteine desulfurase] + AH2 + ATP = 2-thiocytidine(32) in tRNA + L-cysteinyl-[cysteine desulfurase] + A + AMP + diphosphate + H(+). It functions in the pathway tRNA modification. Catalyzes the ATP-dependent 2-thiolation of cytidine in position 32 of tRNA, to form 2-thiocytidine (s(2)C32). The sulfur atoms are provided by the cysteine/cysteine desulfurase (IscS) system. This chain is tRNA-cytidine(32) 2-sulfurtransferase, found in Burkholderia lata (strain ATCC 17760 / DSM 23089 / LMG 22485 / NCIMB 9086 / R18194 / 383).